Consider the following 710-residue polypeptide: Bifunctional sesterterpene synthase (710 aa).

The interval 1-327 (MEFKFSAVVD…RYYTDASFSE (327 aa)) is stellata-2,6,19-trien synthase. Mg(2+) contacts are provided by Asp-92 and Asp-96. Substrate-binding positions include Asp-92, Asp-96, 181–184 (RVHD), and 229–233 (SWDKE). Residues 92 to 96 (DDVTD) carry the DDXXD motif 1 motif. An NSE motif motif is present at residues 278–286 (YLRVFEEVK). 318 to 319 (RY) is a binding site for substrate. Residues 328–709 (RQLEWMKNGI…LRLIFELLRN (382 aa)) are geranylgeranyl diphosphate synthase. A disordered region spans residues 365 to 404 (HHAVTSNGTGTGSHDTLNGDGTAHENNSRDASIPGRTTNG). Positions 368–380 (VTSNGTGTGSHDT) are enriched in polar residues. Isopentenyl diphosphate contacts are provided by Lys-430, Arg-433, and His-462. Mg(2+) contacts are provided by Asp-469 and Asp-473. Positions 469-473 (DDLED) match the DDXXD motif 2 motif. Dimethylallyl diphosphate is bound at residue Arg-478. Arg-479 serves as a coordination point for isopentenyl diphosphate. Residues Lys-556, Thr-557, Gln-592, Asn-599, Lys-609, and Lys-619 each contribute to the dimethylallyl diphosphate site.

This sequence in the C-terminal section; belongs to the FPP/GGPP synthase family. In the N-terminal section; belongs to the terpene synthase family. As to quaternary structure, hexamer.

The enzyme catalyses 4 isopentenyl diphosphate + dimethylallyl diphosphate = (2E,6E,10E,14E)-geranylfarnesyl diphosphate + 4 diphosphate. It catalyses the reaction (2E,6E,10E,14E)-geranylfarnesyl diphosphate = variecoladiene + diphosphate. It functions in the pathway secondary metabolite biosynthesis; terpenoid biosynthesis. Multifunctional sesterterpene synthase; part of the gene cluster that mediates the biosynthesis of the sesterterpene variecolin. The first step in the pathway is performed by the variecoladiene synthase vrcA that possesses both prenyl transferase and terpene cyclase activity, converting isopentenyl diphosphate and dimethylallyl diphosphate into geranylfarnesyl pyrophosphate (GFPP) and then converting GFPP into the tetracyclic variecoladiene. The cytochrome P450 monooxygenase vrcB then catalyzes multiple oxidations at C-5 and C-20 positions to yield variecolin. The chain is Bifunctional sesterterpene synthase from Aspergillus aculeatus (strain ATCC 16872 / CBS 172.66 / WB 5094).